A 154-amino-acid chain; its full sequence is Acidic phospholipase A2 1 (154 aa).

The N-terminal stretch at 1-19 (MHPAHLLVLLGVCVSLLGA) is a signal peptide. The propeptide occupies 20 to 27 (ARIPPLPL). 7 cysteine pairs are disulfide-bonded: Cys-38–Cys-104, Cys-54–Cys-153, Cys-56–Cys-72, Cys-71–Cys-132, Cys-78–Cys-125, Cys-88–Cys-118, and Cys-111–Cys-123. Positions 55, 57, and 59 each coordinate Ca(2+). His-75 is a catalytic residue. Position 76 (Asp-76) interacts with Ca(2+). Asp-126 is an active-site residue.

It belongs to the phospholipase A2 family. Group I subfamily. D49 sub-subfamily. In terms of assembly, monomer. Ca(2+) is required as a cofactor. Expressed by the venom gland.

Its subcellular location is the secreted. It catalyses the reaction a 1,2-diacyl-sn-glycero-3-phosphocholine + H2O = a 1-acyl-sn-glycero-3-phosphocholine + a fatty acid + H(+). In terms of biological role, snake venom phospholipase A2 (PLA2) that shows moderate enzymatic activity and exhibits procoagulant activity. PLA2 catalyzes the calcium-dependent hydrolysis of the 2-acyl groups in 3-sn-phosphoglycerides. The chain is Acidic phospholipase A2 1 from Pseudonaja textilis (Eastern brown snake).